Reading from the N-terminus, the 131-residue chain is Glycine cleavage system H protein (131 aa).

Residues 24-106 enclose the Lipoyl-binding domain; it reads TVRVGITDYA…YGEGWLVELQ (83 aa). Lys65 bears the N6-lipoyllysine mark.

The protein belongs to the GcvH family. As to quaternary structure, the glycine cleavage system is composed of four proteins: P, T, L and H. Requires (R)-lipoate as cofactor.

The glycine cleavage system catalyzes the degradation of glycine. The H protein shuttles the methylamine group of glycine from the P protein to the T protein. In Mycolicibacterium gilvum (strain PYR-GCK) (Mycobacterium gilvum (strain PYR-GCK)), this protein is Glycine cleavage system H protein.